A 92-amino-acid chain; its full sequence is RNA-binding protein Hfq (92 aa).

The 60-residue stretch at 9 to 68 (DPYLNALRRERIPVSIYLVNGIKLQGQIESFDQFVILLKNTVSQMVYKHAISTVVPARSV) folds into the Sm domain. The span at 69–81 (SHNNGGTSHTQQA) shows a compositional bias: polar residues. Residues 69 to 92 (SHNNGGTSHTQQAPAVEAVADKAE) form a disordered region.

This sequence belongs to the Hfq family. Homohexamer.

In terms of biological role, RNA chaperone that binds small regulatory RNA (sRNAs) and mRNAs to facilitate mRNA translational regulation in response to envelope stress, environmental stress and changes in metabolite concentrations. Also binds with high specificity to tRNAs. The chain is RNA-binding protein Hfq from Actinobacillus pleuropneumoniae serotype 5b (strain L20).